A 291-amino-acid chain; its full sequence is Exosome complex component RRP42 (291 aa).

The residue at position 2 (alanine 2) is an N-acetylalanine. Residue lysine 116 is modified to N6-acetyllysine. The residue at position 177 (serine 177) is a Phosphoserine.

Belongs to the RNase PH family. In terms of assembly, component of the RNA exosome core complex (Exo-9), composed of EXOSC1, EXOSC2, EXOSC3, EXOSC4, EXOSC5, EXOSC6, EXOSC7, EXOSC8 and EXOSC9; within the complex interacts with EXOSC2 and EXOSC4. The catalytically inactive RNA exosome core complex (Exo-9) associates with the catalytic subunit EXOSC10/RRP6. Exo-9 may associate with DIS3 to form the nucleolar exosome complex, or DIS3L to form the cytoplasmic exosome complex. Exo-9 is formed by a hexameric base ring consisting of the heterodimers EXOSC4-EXOSC9, EXOSC5-EXOSC8 and EXOSC6-EXOSC7, and a cap ring consisting of EXOSC1, EXOSC2 and EXOSC3. The RNA exosome complex associates with cofactors C1D/RRP47, MPHOSPH6/MPP6 and MTREX/MTR4. Interacts with ZC3HAV1. Interacts with DIS3; the interaction is direct.

It is found in the nucleus. The protein resides in the nucleolus. Its subcellular location is the cytoplasm. Functionally, non-catalytic component of the RNA exosome complex which has 3'-&gt;5' exoribonuclease activity and participates in a multitude of cellular RNA processing and degradation events. In the nucleus, the RNA exosome complex is involved in proper maturation of stable RNA species such as rRNA, snRNA and snoRNA, in the elimination of RNA processing by-products and non-coding 'pervasive' transcripts, such as antisense RNA species and promoter-upstream transcripts (PROMPTs), and of mRNAs with processing defects, thereby limiting or excluding their export to the cytoplasm. The RNA exosome may be involved in Ig class switch recombination (CSR) and/or Ig variable region somatic hypermutation (SHM) by targeting AICDA deamination activity to transcribed dsDNA substrates. In the cytoplasm, the RNA exosome complex is involved in general mRNA turnover and specifically degrades inherently unstable mRNAs containing AU-rich elements (AREs) within their 3' untranslated regions, and in RNA surveillance pathways, preventing translation of aberrant mRNAs. It seems to be involved in degradation of histone mRNA. The catalytic inactive RNA exosome core complex of 9 subunits (Exo-9) is proposed to play a pivotal role in the binding and presentation of RNA for ribonucleolysis, and to serve as a scaffold for the association with catalytic subunits and accessory proteins or complexes. In Homo sapiens (Human), this protein is Exosome complex component RRP42 (EXOSC7).